The following is a 653-amino-acid chain: Chaperone protein DnaK (653 aa).

Residue Thr200 is modified to Phosphothreonine; by autocatalysis. Positions 612–653 (QGAAGAAGAAGGAGAAAGAEAAGASQQADDVVDAEFKEVKKD) are disordered. The segment covering 627–639 (AAGAEAAGASQQA) has biased composition (low complexity).

It belongs to the heat shock protein 70 family.

Functionally, acts as a chaperone. The sequence is that of Chaperone protein DnaK from Paraburkholderia phymatum (strain DSM 17167 / CIP 108236 / LMG 21445 / STM815) (Burkholderia phymatum).